The primary structure comprises 273 residues: Large ribosomal subunit protein uL2c (273 aa).

Residues 223–273 are disordered; it reads MNPVDHPHGGGEGRAPIGRKKPTTPWGYPALGRRSRKRNKYSDSFILRRRK.

It belongs to the universal ribosomal protein uL2 family. Part of the 50S ribosomal subunit.

It is found in the plastid. It localises to the chloroplast. In Calycanthus floridus var. glaucus (Eastern sweetshrub), this protein is Large ribosomal subunit protein uL2c (rpl2).